The sequence spans 1525 residues: Dicer-like protein 1 (1525 aa).

The segment covering 37–52 (DLQEDDGSSDESDNDE) has biased composition (acidic residues). The interval 37–65 (DLQEDDGSSDESDNDEREDHSKTGVSQQR) is disordered. The Helicase ATP-binding domain occupies 124 to 305 (LFERAKVQNT…DEATRLEKLL (182 aa)). An ATP-binding site is contributed by 137 to 144 (LDTGSGKT). Positions 250 to 253 (DEAH) match the DEAH box motif. Positions 439-605 (QLSPKVQVLR…SFCRTLPEDR (167 aa)) constitute a Helicase C-terminal domain. One can recognise a Dicer dsRNA-binding fold domain in the interval 641 to 731 (ATAILARYAS…NSIYHRRLPA (91 aa)). Residues 881–1009 (ESLTYVRDND…ICIEPLKVSA (129 aa)) enclose the PAZ domain. RNase III domains follow at residues 1032-1192 (LISL…LSGG) and 1243-1394 (SRKI…VDSD). Residues glutamate 1283, aspartate 1380, and glutamate 1383 each coordinate Mg(2+). The region spanning 1428-1496 (TFLHNRLTNE…SEKALAVLDE (69 aa)) is the DRBM domain. Zn(2+) contacts are provided by cysteine 1440, histidine 1467, cysteine 1508, and cysteine 1510.

It belongs to the helicase family. Dicer subfamily. Mg(2+) serves as cofactor. The cofactor is Mn(2+).

In terms of biological role, dicer-like endonuclease involved in cleaving double-stranded RNA in the RNA interference (RNAi) pathway. Produces 21 to 25 bp dsRNAs (siRNAs) which target the selective destruction of homologous RNAs leading to sequence-specific suppression of gene expression, called post-transcriptional gene silencing (PTGS). Part of a broad host defense response against viral infection and transposons. The polypeptide is Dicer-like protein 1 (dcl1) (Aspergillus niger (strain ATCC MYA-4892 / CBS 513.88 / FGSC A1513)).